The chain runs to 622 residues: Chaperone protein DnaK (622 aa).

T197 bears the Phosphothreonine; by autocatalysis mark. Basic and acidic residues-rich tracts occupy residues 515-528 and 575-614; these read LHKE…EAVE and ASKE…KKDD. 2 disordered regions span residues 515 to 537 and 575 to 622; these read LHKE…DSLV and ASKE…AEVE.

The protein belongs to the heat shock protein 70 family.

Its function is as follows. Acts as a chaperone. The protein is Chaperone protein DnaK of Campylobacter lari (strain RM2100 / D67 / ATCC BAA-1060).